The primary structure comprises 288 residues: Bifunctional protein FolD (288 aa).

NADP(+)-binding positions include 164-166 (GRS) and Val-230.

It belongs to the tetrahydrofolate dehydrogenase/cyclohydrolase family. In terms of assembly, homodimer.

The enzyme catalyses (6R)-5,10-methylene-5,6,7,8-tetrahydrofolate + NADP(+) = (6R)-5,10-methenyltetrahydrofolate + NADPH. It carries out the reaction (6R)-5,10-methenyltetrahydrofolate + H2O = (6R)-10-formyltetrahydrofolate + H(+). Its pathway is one-carbon metabolism; tetrahydrofolate interconversion. Catalyzes the oxidation of 5,10-methylenetetrahydrofolate to 5,10-methenyltetrahydrofolate and then the hydrolysis of 5,10-methenyltetrahydrofolate to 10-formyltetrahydrofolate. The chain is Bifunctional protein FolD from Thermomicrobium roseum (strain ATCC 27502 / DSM 5159 / P-2).